A 172-amino-acid chain; its full sequence is Ribosome maturation factor RimM (172 aa).

The 73-residue stretch at 96–168 (DGEFYYHEII…RVQVELMEGL (73 aa)) folds into the PRC barrel domain.

The protein belongs to the RimM family. Binds ribosomal protein uS19.

It localises to the cytoplasm. An accessory protein needed during the final step in the assembly of 30S ribosomal subunit, possibly for assembly of the head region. Essential for efficient processing of 16S rRNA. May be needed both before and after RbfA during the maturation of 16S rRNA. It has affinity for free ribosomal 30S subunits but not for 70S ribosomes. In Streptococcus agalactiae serotype III (strain NEM316), this protein is Ribosome maturation factor RimM.